A 223-amino-acid polypeptide reads, in one-letter code: Ribose-5-phosphate isomerase A (223 aa).

Residues 29 to 32 (TGST), 82 to 85 (DGAD), and 95 to 98 (KGGG) contribute to the substrate site. Glu104 acts as the Proton acceptor in catalysis. Residue Lys122 coordinates substrate.

This sequence belongs to the ribose 5-phosphate isomerase family. In terms of assembly, homodimer.

The catalysed reaction is aldehydo-D-ribose 5-phosphate = D-ribulose 5-phosphate. It functions in the pathway carbohydrate degradation; pentose phosphate pathway; D-ribose 5-phosphate from D-ribulose 5-phosphate (non-oxidative stage): step 1/1. Functionally, catalyzes the reversible conversion of ribose-5-phosphate to ribulose 5-phosphate. In Neisseria meningitidis serogroup C / serotype 2a (strain ATCC 700532 / DSM 15464 / FAM18), this protein is Ribose-5-phosphate isomerase A.